Reading from the N-terminus, the 201-residue chain is LexA repressor 1 (201 aa).

A DNA-binding region (H-T-H motif) is located at residues 27-47 (LAEIAQAFGFASRNAAQKHVQ). Catalysis depends on for autocatalytic cleavage activity residues serine 122 and lysine 159.

The protein belongs to the peptidase S24 family. As to quaternary structure, homodimer.

It catalyses the reaction Hydrolysis of Ala-|-Gly bond in repressor LexA.. Functionally, represses a number of genes involved in the response to DNA damage (SOS response), including recA and lexA. In the presence of single-stranded DNA, RecA interacts with LexA causing an autocatalytic cleavage which disrupts the DNA-binding part of LexA, leading to derepression of the SOS regulon and eventually DNA repair. The sequence is that of LexA repressor 1 from Xanthomonas axonopodis pv. citri (strain 306).